The chain runs to 502 residues: Xylan O-acetyltransferase 13 (502 aa).

At 1–53 the chain is on the cytoplasmic side; it reads MWSALFSHLREVHKRSGVKEEKLIMKSPPAAGEAGCHKPQATATNKMTVLQSP. A helical; Signal-anchor for type II membrane protein membrane pass occupies residues 54 to 76; the sequence is LGLRTILTSLVAFFIVVSSVSLL. Topologically, residues 77 to 502 are lumenal; it reads FDRGQDAQAQ…EFLYAYIMHK (426 aa). 4 cysteine pairs are disulfide-bonded: cysteine 152/cysteine 203, cysteine 174/cysteine 239, cysteine 183/cysteine 483, and cysteine 399/cysteine 479. Asparagine 153, asparagine 163, asparagine 189, and asparagine 209 each carry an N-linked (GlcNAc...) asparagine glycan. Positions 226–228 match the GDS motif motif; sequence GDS. Serine 228 acts as the Nucleophile in catalysis. Residues asparagine 255, asparagine 267, asparagine 372, asparagine 401, and asparagine 442 are each glycosylated (N-linked (GlcNAc...) asparagine). The Proton donor role is filled by aspartate 478. Positions 478–481 match the DXXH motif motif; sequence DCTH. The active-site Proton acceptor is the histidine 481.

This sequence belongs to the PC-esterase family. TBL subfamily.

The protein resides in the golgi apparatus membrane. In terms of biological role, xylan acetyltransferase required for 2-O- and 3-O-monoacetylation of xylosyl residues in xylan. Catalyzes the 2-O-acetylation of xylan, followed by nonenzymatic acetyl migration to the O-3 position, resulting in products that are monoacetylated at both O-2 and O-3 positions. The protein is Xylan O-acetyltransferase 13 of Oryza sativa subsp. japonica (Rice).